Consider the following 582-residue polypeptide: Semenogelin-2 (582 aa).

The first 23 residues, 1–23 (MKSIILFVLSLLLILEKQAAVMG), serve as a signal peptide directing secretion. Disordered regions lie at residues 25–62 (KGGS…SKGS), 131–156 (KGGQ…KGIF), 173–192 (KEQA…GSQS), 272–477 (NLNQ…EQRQ), and 502–554 (VEGK…SGAH). Over residues 50-59 (GQKDKQHTES) the composition is skewed to basic and acidic residues. Composition is skewed to polar residues over residues 137-151 (HGTQ…NSPS) and 174-192 (EQAS…GSQS). The span at 292–310 (RTEERQLNHGEKSVQKDVS) shows a compositional bias: basic and acidic residues. The segment covering 325–335 (KSQNQVTIPSQ) has biased composition (polar residues). A compositionally biased stretch (basic and acidic residues) spans 336-345 (DQEHGHKENK). Residues 385 to 395 (KSQNQVTIPSQ) are compositionally biased toward polar residues. The span at 396–405 (DQEHGHKENK) shows a compositional bias: basic and acidic residues. A compositionally biased stretch (polar residues) spans 445–455 (KSQNQVTIPSQ). Over residues 456–465 (DQEHGHKENK) the composition is skewed to basic and acidic residues. Composition is skewed to polar residues over residues 466 to 477 (ISYQSSSTEQRQ) and 506 to 529 (SQIQ…NSGK). Over residues 537-546 (LLSHEQEGRY) the composition is skewed to basic and acidic residues.

Belongs to the semenogelin family. Interacts with SERPINA5.

It localises to the secreted. Functionally, participates in the formation of a gel matrix (sperm coagulum) entrapping the accessory gland secretions and ejaculated spermatozoa. The sequence is that of Semenogelin-2 (SEMG2) from Macaca nemestrina (Pig-tailed macaque).